Reading from the N-terminus, the 1147-residue chain is Cellulose synthase-like protein D3 (1147 aa).

Disordered regions lie at residues 1–33 (MSTG…PAGQ) and 259–281 (KLGG…PFKP). Composition is skewed to gly residues over residues 14 to 29 (GGVG…GPRG) and 262 to 272 (GDGGGGGGGGP). 2 helical membrane passes run 292 to 312 (VISP…FYLT) and 322 to 342 (ALWL…SWLL). Catalysis depends on residues Asp422 and Asp847. 6 consecutive transmembrane segments (helical) span residues 929–949 (IFLL…FFIV), 954–974 (IAFL…GILE), 1001–1021 (LYAV…SFTL), 1045–1065 (LLIP…FAFA), 1075–1095 (WGKF…LNPF), and 1108–1128 (TIVF…WVAI).

Belongs to the glycosyltransferase 2 family. Plant cellulose synthase-like D subfamily.

It localises to the golgi apparatus membrane. In terms of biological role, thought to be a Golgi-localized beta-glycan synthase that polymerize the backbones of noncellulosic polysaccharides (hemicelluloses) of plant cell wall. The polypeptide is Cellulose synthase-like protein D3 (CSLD3) (Oryza sativa subsp. japonica (Rice)).